The primary structure comprises 1072 residues: DNA-directed RNA polymerase subunit beta (1072 aa).

Belongs to the RNA polymerase beta chain family. As to quaternary structure, in plastids the minimal PEP RNA polymerase catalytic core is composed of four subunits: alpha, beta, beta', and beta''. When a (nuclear-encoded) sigma factor is associated with the core the holoenzyme is formed, which can initiate transcription.

The protein localises to the plastid. The protein resides in the chloroplast. The enzyme catalyses RNA(n) + a ribonucleoside 5'-triphosphate = RNA(n+1) + diphosphate. DNA-dependent RNA polymerase catalyzes the transcription of DNA into RNA using the four ribonucleoside triphosphates as substrates. The sequence is that of DNA-directed RNA polymerase subunit beta from Eucalyptus globulus subsp. globulus (Tasmanian blue gum).